Here is a 249-residue protein sequence, read N- to C-terminus: Probable transcriptional regulatory protein Tfu_2096 (249 aa).

Belongs to the TACO1 family.

It localises to the cytoplasm. This chain is Probable transcriptional regulatory protein Tfu_2096, found in Thermobifida fusca (strain YX).